A 758-amino-acid polypeptide reads, in one-letter code: Polyribonucleotide nucleotidyltransferase (758 aa).

The Mg(2+) site is built by D482 and D488. In terms of domain architecture, KH spans P549–M608. Residues G618 to R686 enclose the S1 motif domain. Residues D707–Y758 are disordered. The span at N711–N721 shows a compositional bias: low complexity.

This sequence belongs to the polyribonucleotide nucleotidyltransferase family. Mg(2+) is required as a cofactor.

It is found in the cytoplasm. It carries out the reaction RNA(n+1) + phosphate = RNA(n) + a ribonucleoside 5'-diphosphate. In terms of biological role, involved in mRNA degradation. Catalyzes the phosphorolysis of single-stranded polyribonucleotides processively in the 3'- to 5'-direction. This is Polyribonucleotide nucleotidyltransferase from Wolbachia pipientis subsp. Culex pipiens (strain wPip).